The sequence spans 949 residues: Isoleucine--tRNA ligase (949 aa).

The 'HIGH' region motif lies at 58-68 (PYANGDIHIGH). Position 567 (glutamate 567) interacts with L-isoleucyl-5'-AMP. The 'KMSKS' region motif lies at 608–612 (KMSKS). Lysine 611 is a binding site for ATP. Zn(2+)-binding residues include cysteine 912, cysteine 915, cysteine 932, and cysteine 935.

This sequence belongs to the class-I aminoacyl-tRNA synthetase family. IleS type 1 subfamily. In terms of assembly, monomer. Zn(2+) serves as cofactor.

It is found in the cytoplasm. It catalyses the reaction tRNA(Ile) + L-isoleucine + ATP = L-isoleucyl-tRNA(Ile) + AMP + diphosphate. In terms of biological role, catalyzes the attachment of isoleucine to tRNA(Ile). As IleRS can inadvertently accommodate and process structurally similar amino acids such as valine, to avoid such errors it has two additional distinct tRNA(Ile)-dependent editing activities. One activity is designated as 'pretransfer' editing and involves the hydrolysis of activated Val-AMP. The other activity is designated 'posttransfer' editing and involves deacylation of mischarged Val-tRNA(Ile). This chain is Isoleucine--tRNA ligase, found in Vibrio cholerae serotype O1 (strain ATCC 39315 / El Tor Inaba N16961).